We begin with the raw amino-acid sequence, 57 residues long: Large ribosomal subunit protein bL32 (57 aa).

A disordered region spans residues 1 to 23 (MAVPKKRTSKTRTNRRRAQKKAR).

This sequence belongs to the bacterial ribosomal protein bL32 family.

The sequence is that of Large ribosomal subunit protein bL32 from Natranaerobius thermophilus (strain ATCC BAA-1301 / DSM 18059 / JW/NM-WN-LF).